The chain runs to 316 residues: uncharacterized protein (316 aa).

In terms of domain architecture, S4 RNA-binding spans 26 to 98; it reads ERIDRFLAGA…IPLDVVYEDA (73 aa). Residue D148 is part of the active site.

The protein belongs to the pseudouridine synthase RluA family.

The enzyme catalyses a uridine in RNA = a pseudouridine in RNA. This is an uncharacterized protein from Chloroflexus aurantiacus (strain ATCC 29366 / DSM 635 / J-10-fl).